A 500-amino-acid polypeptide reads, in one-letter code: Beta-glucosidase 30 (500 aa).

A signal peptide spans 1-25 (MGIRMGRRLLFTLFLGALFCNGVYA). Position 46 (glutamine 46) interacts with a beta-D-glucoside. N-linked (GlcNAc...) asparagine glycans are attached at residues asparagine 63 and asparagine 114. A beta-D-glucoside contacts are provided by residues histidine 149 and 194-195 (NE). The active-site Proton donor is glutamate 195. Cysteine 214 and cysteine 222 form a disulfide bridge. Tyrosine 338 contacts a beta-D-glucoside. N-linked (GlcNAc...) asparagine glycosylation occurs at asparagine 363. Residue glutamate 409 participates in a beta-D-glucoside binding. The Nucleophile role is filled by glutamate 409. N-linked (GlcNAc...) asparagine glycans are attached at residues asparagine 416 and asparagine 417. Residues tryptophan 456, 463 to 464 (EW), and phenylalanine 472 contribute to the a beta-D-glucoside site.

It belongs to the glycosyl hydrolase 1 family.

It catalyses the reaction Hydrolysis of terminal, non-reducing beta-D-glucosyl residues with release of beta-D-glucose.. This is Beta-glucosidase 30 (BGLU30) from Oryza sativa subsp. japonica (Rice).